Here is an 85-residue protein sequence, read N- to C-terminus: Photosystem I reaction center subunit PsaK (85 aa).

Transmembrane regions (helical) follow at residues Val13–Ile33 and Gly59–Leu79.

It belongs to the PsaG/PsaK family.

It localises to the cellular thylakoid membrane. This Synechococcus sp. (strain WH7803) protein is Photosystem I reaction center subunit PsaK.